Here is a 491-residue protein sequence, read N- to C-terminus: Interferon regulatory factor 3 (491 aa).

Residues 12 to 116 (KLRFGPWLLN…DPHKVYAVAS (105 aa)) constitute a DNA-binding region (IRF tryptophan pentad repeat).

This sequence belongs to the IRF family. Widely expressed with higher expression in lung, spleen and intestine.

It localises to the cytoplasm. The protein resides in the nucleus. Functionally, key transcriptional regulator of type I interferon (IFN)-dependent immune responses which plays a critical role in the innate immune response against DNA and RNA viruses. Regulates the transcription of type I IFN genes (IFN-alpha and IFN-beta) and IFN-stimulated genes (ISG) by binding to an interferon-stimulated response element (ISRE) in their promoters. May activate transcription by complex formation with other transcriptional factors, possibly members of the STAT family. Binds specifically to the IFN-stimulated response element (ISRE) but not to the IRF-1 binding site PRD-I. The sequence is that of Interferon regulatory factor 3 (IRF3) from Gallus gallus (Chicken).